Here is a 255-residue protein sequence, read N- to C-terminus: Aliphatic sulfonates import ATP-binding protein SsuB (255 aa).

The ABC transporter domain occupies 12–233; the sequence is LLLNAVSKHY…RLGSVRLAEL (222 aa). An ATP-binding site is contributed by 44–51; it reads GRSGGGKS.

Belongs to the ABC transporter superfamily. Aliphatic sulfonates importer (TC 3.A.1.17.2) family. The complex is composed of two ATP-binding proteins (SsuB), two transmembrane proteins (SsuC) and a solute-binding protein (SsuA).

It localises to the cell inner membrane. It carries out the reaction ATP + H2O + aliphatic sulfonate-[sulfonate-binding protein]Side 1 = ADP + phosphate + aliphatic sulfonateSide 2 + [sulfonate-binding protein]Side 1.. Part of the ABC transporter complex SsuABC involved in aliphatic sulfonates import. Responsible for energy coupling to the transport system. The chain is Aliphatic sulfonates import ATP-binding protein SsuB from Escherichia coli O1:K1 / APEC.